The chain runs to 265 residues: Silencing boundary-establishment protein FUB1-like protein (265 aa).

The segment at 194–265 (HPENRSRNEQ…MPPGSSDMFM (72 aa)) is disordered.

Belongs to the proteasome inhibitor PI31 family. Interacts with the 20S proteasome.

It localises to the cytoplasm. The protein resides in the nucleus. Its function is as follows. May play a role in the establishment of transcriptional silencing boundaries, preventing the propagation of heterochromatic silencing. The protein is Silencing boundary-establishment protein FUB1-like protein of Schizosaccharomyces pombe (strain 972 / ATCC 24843) (Fission yeast).